The primary structure comprises 217 residues: Uridylate kinase (217 aa).

6–10 (KLSGR) is a binding site for ATP. A UMP-binding site is contributed by G38. Residues G39 and R43 each contribute to the ATP site. UMP contacts are provided by residues D60 and 107-113 (FQPGQST). ATP-binding residues include N134, Y139, and D142.

The protein belongs to the UMP kinase family. Homohexamer.

The protein localises to the cytoplasm. The enzyme catalyses UMP + ATP = UDP + ADP. It participates in pyrimidine metabolism; CTP biosynthesis via de novo pathway; UDP from UMP (UMPK route): step 1/1. Inhibited by UTP. Catalyzes the reversible phosphorylation of UMP to UDP. The chain is Uridylate kinase from Pyrobaculum neutrophilum (strain DSM 2338 / JCM 9278 / NBRC 100436 / V24Sta) (Thermoproteus neutrophilus).